We begin with the raw amino-acid sequence, 389 residues long: Adenylyltransferase and sulfurtransferase uba4 (389 aa).

ATP contacts are provided by residues Gly40, Asp61, 68–72, Lys85, and 129–130; these read SNLHR and DT. Zn(2+)-binding residues include Cys171 and Cys174. The Glycyl thioester intermediate; for adenylyltransferase activity role is filled by Cys188. Cys252 and Cys255 together coordinate Zn(2+). One can recognise a Rhodanese domain in the interval 298–387; sequence AQRAPYLVDV…WSRQIDPNFP (90 aa). Cys347 serves as the catalytic Cysteine persulfide intermediate.

In the N-terminal section; belongs to the HesA/MoeB/ThiF family. UBA4 subfamily. Zn(2+) serves as cofactor.

Its subcellular location is the cytoplasm. It is found in the cytosol. The enzyme catalyses [molybdopterin-synthase sulfur-carrier protein]-C-terminal Gly-Gly + ATP + H(+) = [molybdopterin-synthase sulfur-carrier protein]-C-terminal Gly-Gly-AMP + diphosphate. The catalysed reaction is [molybdopterin-synthase sulfur-carrier protein]-C-terminal Gly-Gly-AMP + S-sulfanyl-L-cysteinyl-[cysteine desulfurase] + AH2 = [molybdopterin-synthase sulfur-carrier protein]-C-terminal-Gly-aminoethanethioate + L-cysteinyl-[cysteine desulfurase] + A + AMP + 2 H(+). It participates in tRNA modification; 5-methoxycarbonylmethyl-2-thiouridine-tRNA biosynthesis. The protein operates within cofactor biosynthesis; molybdopterin biosynthesis. Functionally, plays a central role in 2-thiolation of mcm(5)S(2)U at tRNA wobble positions of cytosolic tRNA(Lys), tRNA(Glu) and tRNA(Gln). Also essential during biosynthesis of the molybdenum cofactor. Acts by mediating the C-terminal thiocarboxylation of sulfur carriers URM1 and CNX5/MOCS2A. Its N-terminus first activates urm1 and mocs2a as acyl-adenylates (-COAMP), then the persulfide sulfur on the catalytic cysteine is transferred to URM1 and CNX5/MOCS2A to form thiocarboxylation (-COSH) of their C-terminus. The reaction probably involves hydrogen sulfide that is generated from the persulfide intermediate and that acts as a nucleophile towards URM1 and CNX5/MOCS2A. Subsequently, a transient disulfide bond is formed. Does not use thiosulfate as sulfur donor; NFS1 probably acting as a sulfur donor for thiocarboxylation reactions. Required for growth on nitrate as a sole nitrogen source. This chain is Adenylyltransferase and sulfurtransferase uba4, found in Ogataea parapolymorpha (strain ATCC 26012 / BCRC 20466 / JCM 22074 / NRRL Y-7560 / DL-1) (Yeast).